Here is a 1333-residue protein sequence, read N- to C-terminus: ABC transporter ATP-binding protein/permease PDR18 (1333 aa).

The chain crosses the membrane as a helical span at residues 13 to 33 (FLEGQTFGDILCLPWTIIKGI). Residues 30–281 (IKGIRERKNR…FENMGYLCPP (252 aa)) form the ABC transporter 1 domain. N-linked (GlcNAc...) asparagine glycans are attached at residues Asn48, Asn144, Asn205, and Asn350. Transmembrane regions (helical) follow at residues 392 to 412 (YTVI…SLFY), 425 to 445 (SGVL…NISF), 474 to 494 (FPFR…LAGL), 499 to 519 (GAFF…TSLF), 534 to 554 (SIAG…IQLP), and 642 to 662 (FGIM…FTEY). 2 N-linked (GlcNAc...) asparagine glycosylation sites follow: Asn697 and Asn733. The ABC transporter 2 domain occupies 729–971 (FIWKNVSFTI…VIKYFEKNGA (243 aa)). Residue 765-772 (GESGAGKT) coordinates ATP. Asn958 carries N-linked (GlcNAc...) asparagine glycosylation. 6 helical membrane passes run 1071 to 1091 (LLMI…VNAI), 1092 to 1112 (GLQN…PATN), 1150 to 1170 (PYHL…LGVF), 1178 to 1198 (VFYL…ALMI), 1210 to 1230 (VIVG…QPAS), and 1235 to 1255 (FWTF…LVGL). Asn1320 carries an N-linked (GlcNAc...) asparagine glycan.

The protein belongs to the ABC transporter superfamily. ABCG family. PDR (TC 3.A.1.205) subfamily.

It localises to the membrane. This Saccharomyces cerevisiae (strain ATCC 204508 / S288c) (Baker's yeast) protein is ABC transporter ATP-binding protein/permease PDR18 (PDR18).